Consider the following 88-residue polypeptide: Large ribosomal subunit protein bL27 (88 aa).

The tract at residues 1-21 is disordered; it reads MAHKKGASSSRNGRDSAAHRL.

This sequence belongs to the bacterial ribosomal protein bL27 family.

This chain is Large ribosomal subunit protein bL27, found in Mycobacterium ulcerans (strain Agy99).